A 91-amino-acid polypeptide reads, in one-letter code: uncharacterized protein (91 aa).

This sequence belongs to the FrmR/RcnR family.

It localises to the cytoplasm. This is an uncharacterized protein from Serratia marcescens.